The following is a 206-amino-acid chain: AVFTVVNQCPFTVWAASVPVGGGRQLNRGESWRITAPAGTTAARIWARTGCQFDASGRGSCRTGDCGGVVQCTGYGRAPNTLAEYALKQFNNLDFFDISILDGFNVPYSFLPDGGSGCSRGPRCAVDVNARCPAELRQDGVCNNACPVFKKDEYCCVGSAANNCHPTNYSRYFKGQCPDAYSYPKDDATSTFTCPAGTNYKVVFCP.

Disulfide bonds link Cys-9–Cys-205, Cys-51–Cys-61, Cys-66–Cys-72, Cys-118–Cys-194, Cys-124–Cys-177, Cys-132–Cys-142, Cys-146–Cys-155, and Cys-156–Cys-164.

Belongs to the thaumatin family.

In terms of biological role, inhibits both trypsin and alpha-amylase. Inhibits the growth of some plant fungal pathogens. The protein is Alpha-amylase/trypsin inhibitor of Zea mays (Maize).